Reading from the N-terminus, the 133-residue chain is Nickel-responsive regulator (133 aa).

His76, His87, His89, and Cys95 together coordinate Ni(2+).

Belongs to the transcriptional regulatory CopG/NikR family. As to quaternary structure, homotetramer. Requires Ni(2+) as cofactor.

Functionally, transcriptional repressor of the nikABCDE operon. Is active in the presence of excessive concentrations of intracellular nickel. The protein is Nickel-responsive regulator of Escherichia coli (strain SMS-3-5 / SECEC).